The sequence spans 177 residues: MSRIGKYPVEVPKGVTVTLNGQDLAVKGPKGELKLTLVDDVTVEQGESGLKVAPREDTQRARAMWGLSRTLVKNIVTGVTDGFTKTLEINGVGYRAAIQGKNLQLNLGFSHDVLYPIPEGIDIKCTKPTEIVITGIDKQKVGQVAAEIRGYRGPEPYKGKGVKYAGEYIFRKEGKKK.

This sequence belongs to the universal ribosomal protein uL6 family. Part of the 50S ribosomal subunit.

This protein binds to the 23S rRNA, and is important in its secondary structure. It is located near the subunit interface in the base of the L7/L12 stalk, and near the tRNA binding site of the peptidyltransferase center. The sequence is that of Large ribosomal subunit protein uL6 from Parvibaculum lavamentivorans (strain DS-1 / DSM 13023 / NCIMB 13966).